The following is a 289-amino-acid chain: WUSCHEL-related homeobox 1 (289 aa).

The span at 1 to 11 (MDHMQQQQRQQ) shows a compositional bias: low complexity. The segment at 1-34 (MDHMQQQQRQQVGGGGGEEVAGRGGVPVCRPSGT) is disordered. Residues 12–25 (VGGGGGEEVAGRGG) show a composition bias toward gly residues. The homeobox; WUS-type DNA-binding region spans 31 to 96 (PSGTRWTPTT…NHKARERQKK (66 aa)).

The protein belongs to the WUS homeobox family. As to quaternary structure, interacts with TPR1, TPR2 and TPR3. Expressed in young leaf primordia. Expressed in branch an floral meristems. Transiently expressed in the shoot apex.

It localises to the nucleus. Functionally, transcription repressor required for the formation and development of tiller buds and panicles. Required for tiller formation and female sterility. Required for the early developmental stages of axillary meristem formation. Plays a role in maintaining the axillary premeristem zone and in promoting the formation of the axillary meristem by promoting OSH1 expression. Does not seem to be involved in maintenance of the shoot apical meristem (SAM). This chain is WUSCHEL-related homeobox 1, found in Oryza sativa subsp. japonica (Rice).